A 388-amino-acid chain; its full sequence is Alanine racemase 2 (388 aa).

K39 functions as the Proton acceptor; specific for D-alanine in the catalytic mechanism. N6-(pyridoxal phosphate)lysine is present on K39. R137 contributes to the substrate binding site. Y267 (proton acceptor; specific for L-alanine) is an active-site residue. A substrate-binding site is contributed by M315.

The protein belongs to the alanine racemase family. Requires pyridoxal 5'-phosphate as cofactor.

It carries out the reaction L-alanine = D-alanine. It functions in the pathway amino-acid biosynthesis; D-alanine biosynthesis; D-alanine from L-alanine: step 1/1. Catalyzes the interconversion of L-alanine and D-alanine. May also act on other amino acids. This Caldanaerobacter subterraneus subsp. tengcongensis (strain DSM 15242 / JCM 11007 / NBRC 100824 / MB4) (Thermoanaerobacter tengcongensis) protein is Alanine racemase 2 (alr2).